We begin with the raw amino-acid sequence, 173 residues long: Protein-export protein SecB (173 aa).

The tract at residues 148 to 173 is disordered; the sequence is QQQKQRREQGTSDSAPSGSPDNGGRQ. Positions 158 to 167 are enriched in polar residues; that stretch reads TSDSAPSGSP.

It belongs to the SecB family. Homotetramer, a dimer of dimers. One homotetramer interacts with 1 SecA dimer.

Its subcellular location is the cytoplasm. One of the proteins required for the normal export of preproteins out of the cell cytoplasm. It is a molecular chaperone that binds to a subset of precursor proteins, maintaining them in a translocation-competent state. It also specifically binds to its receptor SecA. This is Protein-export protein SecB from Halorhodospira halophila (strain DSM 244 / SL1) (Ectothiorhodospira halophila (strain DSM 244 / SL1)).